The following is a 2090-amino-acid chain: Ninein (2090 aa).

EF-hand domains are found at residues Gln-8–Glu-43 and Leu-42–Arg-77. Ser-152 is subject to Phosphoserine. EF-hand domains follow at residues Trp-182–Gln-217 and Val-219–Ser-252. Gly-245 to Ser-252 contacts GTP. Residue Ser-269 is modified to Phosphoserine. GTP is bound at residue Asp-300 to His-304. In terms of domain architecture, EF-hand 5 spans Glu-317–Val-352. Residues Ile-357–Leu-570 are a coiled coil. Arg-420 to Asp-423 contacts GTP. Positions Asn-574–Ser-595 are disordered. Coiled-coil stretches lie at residues Leu-625–Ser-1027, Leu-1068–Glu-1099, Ser-1181–Gln-1341, and Gln-1441–Lys-1816. Positions Lys-802–Met-1505 are important for interaction with CEP170. The interval Val-1152–Arg-1190 is disordered. 2 positions are modified to phosphoserine: Ser-1550 and Ser-1837. Coiled coils occupy residues Gln-1854–Leu-1885 and Ala-1922–Leu-2067.

As to quaternary structure, homooligomer. Interacts with GSK3B/GSK3-beta via its C-terminal domain. Interacts with C14ORF166, such interaction may prevent its phosphorylation by GSK3B. Interacts with AUNIP (via N-terminus). Identified in a complex with AUNIP and AURKA. Interacts with CCDC120. Interacts (via C-terminus) with CEP250. Interacts with CEP170. Interacts with the gamma-tubulin ring complex component TUBGCP3. Interacts with gamma-tubulin. Isoform 6 does not interact with CEP170 or CEP250. Phosphorylated by AURKA/Aurora kinase A and PKA kinases but not CK2 or AURKB/ Aurora kinase B. As to expression, ubiquitous. Highly expressed in heart and skeletal muscle. Isoform 1 is more expressed than isoform 5.

Its subcellular location is the cytoplasm. The protein resides in the cytoskeleton. The protein localises to the microtubule organizing center. It is found in the centrosome. It localises to the centriole. In terms of biological role, centrosomal protein required in the positioning and anchorage of the microtubule minus-end in epithelial cells. May also act as a centrosome maturation factor. May play a role in microtubule nucleation, by recruiting the gamma-tubulin ring complex to the centrosome. Overexpression does not perturb nucleation or elongation of microtubules but suppresses release of microtubules. Required for centriole organization and microtubule anchoring at the mother centriole. This Homo sapiens (Human) protein is Ninein (NIN).